The chain runs to 424 residues: Ribulose bisphosphate carboxylase (424 aa).

The Proton acceptor role is filled by Lys-159. Lys-161 contributes to the substrate binding site. Mg(2+) is bound by residues Lys-185, Asp-187, and Glu-188. Lys-185 is modified (N6-carboxylysine). The active-site Proton acceptor is the His-277. Residues Arg-278, His-310, 347 to 349 (SGG), and 369 to 372 (QAGG) each bind substrate.

It belongs to the RuBisCO large chain family. Type III subfamily. Homodimer or homodecamer. In contrast to form I RuBisCO, the form III RuBisCO is composed solely of large subunits. Mg(2+) serves as cofactor.

The enzyme catalyses 2 (2R)-3-phosphoglycerate + 2 H(+) = D-ribulose 1,5-bisphosphate + CO2 + H2O. The catalysed reaction is D-ribulose 1,5-bisphosphate + O2 = 2-phosphoglycolate + (2R)-3-phosphoglycerate + 2 H(+). Functionally, catalyzes the addition of molecular CO(2) and H(2)O to ribulose 1,5-bisphosphate (RuBP), generating two molecules of 3-phosphoglycerate (3-PGA). Functions in an archaeal AMP degradation pathway, together with AMP phosphorylase and R15P isomerase. The sequence is that of Ribulose bisphosphate carboxylase from Pyrococcus abyssi (strain GE5 / Orsay).